A 341-amino-acid polypeptide reads, in one-letter code: Anthranilate phosphoribosyltransferase (341 aa).

Residues Gly79, 82 to 83 (GD), Thr87, 89 to 92 (NIST), 107 to 115 (KHGNRAVSS), and Ser119 each bind 5-phospho-alpha-D-ribose 1-diphosphate. Gly79 is a binding site for anthranilate. Position 91 (Ser91) interacts with Mg(2+). Asn110 contacts anthranilate. Arg165 lines the anthranilate pocket. Mg(2+) is bound by residues Asp224 and Glu225.

The protein belongs to the anthranilate phosphoribosyltransferase family. As to quaternary structure, homodimer. It depends on Mg(2+) as a cofactor.

The catalysed reaction is N-(5-phospho-beta-D-ribosyl)anthranilate + diphosphate = 5-phospho-alpha-D-ribose 1-diphosphate + anthranilate. It participates in amino-acid biosynthesis; L-tryptophan biosynthesis; L-tryptophan from chorismate: step 2/5. In terms of biological role, catalyzes the transfer of the phosphoribosyl group of 5-phosphorylribose-1-pyrophosphate (PRPP) to anthranilate to yield N-(5'-phosphoribosyl)-anthranilate (PRA). In Bacillus cereus (strain G9842), this protein is Anthranilate phosphoribosyltransferase.